We begin with the raw amino-acid sequence, 448 residues long: Probable glycine dehydrogenase (decarboxylating) subunit 1 (448 aa).

Belongs to the GcvP family. N-terminal subunit subfamily. In terms of assembly, the glycine cleavage system is composed of four proteins: P, T, L and H. In this organism, the P 'protein' is a heterodimer of two subunits.

The enzyme catalyses N(6)-[(R)-lipoyl]-L-lysyl-[glycine-cleavage complex H protein] + glycine + H(+) = N(6)-[(R)-S(8)-aminomethyldihydrolipoyl]-L-lysyl-[glycine-cleavage complex H protein] + CO2. Its function is as follows. The glycine cleavage system catalyzes the degradation of glycine. The P protein binds the alpha-amino group of glycine through its pyridoxal phosphate cofactor; CO(2) is released and the remaining methylamine moiety is then transferred to the lipoamide cofactor of the H protein. In Geobacillus kaustophilus (strain HTA426), this protein is Probable glycine dehydrogenase (decarboxylating) subunit 1.